The chain runs to 354 residues: MLKNDRLLRALRRDTVDRTPIWLMRQAGRYLPEYRAARQHAGSFLKMAKTPELACEITLQPLRRFPLDAAILFSDILMIPDAMGLELHFIEGEGPRLGKPIRDAAAITQLAVPDMETELRYVMDAVRLIRKELDNSVPLIGFSGSPWTLACYMIEGGSSKEYARIKAMAFNAPDVLHQLLNTVTDAVISYLAAQRAAGAQALQVFDTWGGILSPTMYRTFSLPYLTRIARELERGTGTEHTPLVLFGKGNGPYIAELAMSGTEAVGVDWTIELEDAARRSNGQVALQGNLDPATLYGTPNNIAREVQRTLDSYAAGNGGSREGHVFNLGHGMTPGMNPDHVSALVEAVQRLSRR.

Residues 25–29, phenylalanine 44, aspartate 75, tyrosine 152, threonine 207, and histidine 330 contribute to the substrate site; that span reads RQAGR.

This sequence belongs to the uroporphyrinogen decarboxylase family. Homodimer.

The protein resides in the cytoplasm. It carries out the reaction uroporphyrinogen III + 4 H(+) = coproporphyrinogen III + 4 CO2. Its pathway is porphyrin-containing compound metabolism; protoporphyrin-IX biosynthesis; coproporphyrinogen-III from 5-aminolevulinate: step 4/4. Functionally, catalyzes the decarboxylation of four acetate groups of uroporphyrinogen-III to yield coproporphyrinogen-III. The chain is Uroporphyrinogen decarboxylase from Xylella fastidiosa (strain Temecula1 / ATCC 700964).